The following is a 105-amino-acid chain: Ribonuclease P protein component 4 (105 aa).

Residues Cys-63, Cys-66, Cys-89, and Cys-92 each contribute to the Zn(2+) site.

The protein belongs to the eukaryotic/archaeal RNase P protein component 4 family. In terms of assembly, consists of a catalytic RNA component and at least 4-5 protein subunits. The cofactor is Zn(2+).

It is found in the cytoplasm. It carries out the reaction Endonucleolytic cleavage of RNA, removing 5'-extranucleotides from tRNA precursor.. Functionally, part of ribonuclease P, a protein complex that generates mature tRNA molecules by cleaving their 5'-ends. This Methanoculleus marisnigri (strain ATCC 35101 / DSM 1498 / JR1) protein is Ribonuclease P protein component 4.